Consider the following 1089-residue polypeptide: Platelet-derived growth factor receptor alpha (1089 aa).

Residues 1–24 form the signal peptide; it reads MGTSHQVFLVLSCLLTGPGLISCQ. Ig-like C2-type domains are found at residues 25-113, 117-201, 202-306, 319-410, and 414-517; these read LLLP…SEIE, IYIY…FKTS, EFNV…KRVT, PTFG…FELS, and PASI…LKLV. Topologically, residues 25 to 528 are extracellular; sequence LLLPSILPNE…PTLRSELTVA (504 aa). N-linked (GlcNAc...) asparagine glycosylation is found at asparagine 42, asparagine 76, asparagine 89, asparagine 103, and asparagine 179. Cysteines 49 and 100 form a disulfide. Cystine bridges form between cysteine 150-cysteine 189 and cysteine 235-cysteine 290. 5 N-linked (GlcNAc...) asparagine glycosylation sites follow: asparagine 353, asparagine 359, asparagine 458, asparagine 468, and asparagine 506. A disulfide bridge links cysteine 435 with cysteine 501. The helical transmembrane segment at 529 to 549 threads the bilayer; it reads AAVLVLLVIVIVSLIVLVVIW. Over 550–1089 the chain is Cytoplasmic; that stretch reads KQKPRYEIRW…SSDLVEDSFL (540 aa). Residues tyrosine 572 and tyrosine 574 each carry the phosphotyrosine; by autocatalysis modification. The Protein kinase domain maps to 593–954; sequence LVLGRILGSG…HLSEIVENLL (362 aa). Residues 599-607 and lysine 627 each bind ATP; that span reads LGSGAFGKV. Residues tyrosine 720, tyrosine 731, tyrosine 742, tyrosine 754, tyrosine 762, and tyrosine 768 each carry the phosphotyrosine; by autocatalysis modification. The Proton acceptor role is filled by aspartate 818. Phosphotyrosine; by autocatalysis occurs at positions 849, 988, and 1018. The tract at residues 1018 to 1089 is disordered; the sequence is YIIPLPDIDP…SSDLVEDSFL (72 aa). Over residues 1041 to 1059 the composition is skewed to polar residues; the sequence is SSQTSEESAIETGSSSSTF. Residues 1065–1089 show a composition bias toward acidic residues; that stretch reads ETIEDIDMMDDIGIDSSDLVEDSFL.

Belongs to the protein kinase superfamily. Tyr protein kinase family. CSF-1/PDGF receptor subfamily. As to quaternary structure, interacts with homodimeric PDGFA, PDGFB and PDGFC, and with heterodimers formed by PDGFA and PDGFB. Monomer in the absence of bound ligand. Interaction with dimeric PDGFA, PDGFB and/or PDGFC leads to receptor dimerization, where both PDGFRA homodimers and heterodimers with PDGFRB are observed. Interacts (tyrosine phosphorylated) with SHB (via SH2 domain). Interacts (tyrosine phosphorylated) with SHF (via SH2 domain). Interacts (tyrosine phosphorylated) with SRC (via SH2 domain). Interacts (tyrosine phosphorylated) with PIK3R1. Interacts (tyrosine phosphorylated) with PLCG1 (via SH2 domain). Interacts (tyrosine phosphorylated) with CRK, GRB2 and GRB7. Interacts with CD248; this interaction promotes PDGF receptor signaling pathway. Post-translationally, ubiquitinated, leading to its internalization and degradation. In terms of processing, autophosphorylated on tyrosine residues upon ligand binding. Autophosphorylation occurs in trans, i.e. one subunit of the dimeric receptor phosphorylates tyrosine residues on the other subunit. Phosphorylation at Tyr-731 and Tyr-742 is important for interaction with PIK3R1. Phosphorylation at Tyr-720 and Tyr-754 is important for interaction with PTPN11. Phosphorylation at Tyr-762 is important for interaction with CRK. Phosphorylation at Tyr-572 and Tyr-574 is important for interaction with SRC and SRC family members. Phosphorylation at Tyr-988 and Tyr-1018 is important for interaction with PLCG1. As to expression, focally expressed in cortical interstitial cells and highly expressed in the interstitium of the papillary region. Also expressed by adventitial cells in arterial vessels. Up-regulated in areas of renal fibrosis. In mice with unilateral ureteral obstruction, expression in cortical interstitial cells becomes prominent at day 4 which increases progressively until day 14.

Its subcellular location is the cell membrane. It localises to the cell projection. The protein localises to the cilium. It is found in the golgi apparatus. It carries out the reaction L-tyrosyl-[protein] + ATP = O-phospho-L-tyrosyl-[protein] + ADP + H(+). Present in an inactive conformation in the absence of bound ligand. Binding of PDGFA and/or PDGFB leads to dimerization and activation by autophosphorylation on tyrosine residues. Inhibited by imatinib, nilotinib and sorafenib. In terms of biological role, tyrosine-protein kinase that acts as a cell-surface receptor for PDGFA, PDGFB and PDGFC and plays an essential role in the regulation of embryonic development, cell proliferation, survival and chemotaxis. Depending on the context, promotes or inhibits cell proliferation and cell migration. Plays an important role in the differentiation of bone marrow-derived mesenchymal stem cells. Required for normal skeleton development and cephalic closure during embryonic development. Required for normal development of the mucosa lining the gastrointestinal tract, and for recruitment of mesenchymal cells and normal development of intestinal villi. Plays a role in cell migration and chemotaxis in wound healing. Plays a role in platelet activation, secretion of agonists from platelet granules, and in thrombin-induced platelet aggregation. Binding of its cognate ligands - homodimeric PDGFA, homodimeric PDGFB, heterodimers formed by PDGFA and PDGFB or homodimeric PDGFC -leads to the activation of several signaling cascades; the response depends on the nature of the bound ligand and is modulated by the formation of heterodimers between PDGFRA and PDGFRB. Phosphorylates PIK3R1, PLCG1, and PTPN11. Activation of PLCG1 leads to the production of the cellular signaling molecules diacylglycerol and inositol 1,4,5-trisphosphate, mobilization of cytosolic Ca(2+) and the activation of protein kinase C. Phosphorylates PIK3R1, the regulatory subunit of phosphatidylinositol 3-kinase, and thereby mediates activation of the AKT1 signaling pathway. Mediates activation of HRAS and of the MAP kinases MAPK1/ERK2 and/or MAPK3/ERK1. Promotes activation of STAT family members STAT1, STAT3 and STAT5A and/or STAT5B. Receptor signaling is down-regulated by protein phosphatases that dephosphorylate the receptor and its down-stream effectors, and by rapid internalization of the activated receptor. The polypeptide is Platelet-derived growth factor receptor alpha (Pdgfra) (Mus musculus (Mouse)).